Here is a 127-residue protein sequence, read N- to C-terminus: Fluoride-specific ion channel FluC (127 aa).

4 helical membrane passes run 4-24 (SILA…FLGL), 36-56 (GTLL…AYFA), 68-88 (LIIT…AEVV), and 99-119 (AAGA…LGLF). The Na(+) site is built by glycine 75 and threonine 78.

This sequence belongs to the fluoride channel Fluc/FEX (TC 1.A.43) family.

The protein resides in the cell inner membrane. It catalyses the reaction fluoride(in) = fluoride(out). Its activity is regulated as follows. Na(+) is not transported, but it plays an essential structural role and its presence is essential for fluoride channel function. Functionally, fluoride-specific ion channel. Important for reducing fluoride concentration in the cell, thus reducing its toxicity. This chain is Fluoride-specific ion channel FluC, found in Pseudomonas paraeruginosa (strain DSM 24068 / PA7) (Pseudomonas aeruginosa (strain PA7)).